A 412-amino-acid polypeptide reads, in one-letter code: Putative competence-damage inducible protein (412 aa).

It belongs to the CinA family.

The protein is Putative competence-damage inducible protein of Bacillus cereus (strain AH187).